The following is a 366-amino-acid chain: UDP-N-acetylglucosamine--N-acetylmuramyl-(pentapeptide) pyrophosphoryl-undecaprenol N-acetylglucosamine transferase (366 aa).

UDP-N-acetyl-alpha-D-glucosamine-binding positions include 14 to 16, Asn-128, Arg-169, Ser-201, Ile-251, and Gln-296; that span reads TGG.

It belongs to the glycosyltransferase 28 family. MurG subfamily.

It localises to the cell inner membrane. The enzyme catalyses di-trans,octa-cis-undecaprenyl diphospho-N-acetyl-alpha-D-muramoyl-L-alanyl-D-glutamyl-meso-2,6-diaminopimeloyl-D-alanyl-D-alanine + UDP-N-acetyl-alpha-D-glucosamine = di-trans,octa-cis-undecaprenyl diphospho-[N-acetyl-alpha-D-glucosaminyl-(1-&gt;4)]-N-acetyl-alpha-D-muramoyl-L-alanyl-D-glutamyl-meso-2,6-diaminopimeloyl-D-alanyl-D-alanine + UDP + H(+). It functions in the pathway cell wall biogenesis; peptidoglycan biosynthesis. Functionally, cell wall formation. Catalyzes the transfer of a GlcNAc subunit on undecaprenyl-pyrophosphoryl-MurNAc-pentapeptide (lipid intermediate I) to form undecaprenyl-pyrophosphoryl-MurNAc-(pentapeptide)GlcNAc (lipid intermediate II). The polypeptide is UDP-N-acetylglucosamine--N-acetylmuramyl-(pentapeptide) pyrophosphoryl-undecaprenol N-acetylglucosamine transferase (Christiangramia forsetii (strain DSM 17595 / CGMCC 1.15422 / KT0803) (Gramella forsetii)).